The primary structure comprises 1082 residues: RNA-directed RNA polymerase (1082 aa).

In terms of domain architecture, RdRp catalytic spans 498-670 (LSYGDVTRYL…ALASLTGCEI (173 aa)).

This sequence belongs to the reoviridae RNA-directed RNA polymerase family. As to quaternary structure, interacts with VP3 (Potential). Interacts with VP2; this interaction activates VP1. Interacts with NSP5; this interaction is probably necessary for the formation of functional virus factories. Interacts with NSP2; this interaction is weak. The cofactor is Mg(2+).

It localises to the virion. It carries out the reaction RNA(n) + a ribonucleoside 5'-triphosphate = RNA(n+1) + diphosphate. Its function is as follows. RNA-directed RNA polymerase that is involved in both transcription and genome replication. Together with VP3 capping enzyme, forms an enzyme complex positioned near the channels situated at each of the five-fold vertices of the core. Following infection, the outermost layer of the virus is lost, leaving a double-layered particle (DLP) made up of the core and VP6 shell. VP1 then catalyzes the transcription of fully conservative plus-strand genomic RNAs that are extruded through the DLP's channels into the cytoplasm where they function as mRNAs for translation of viral proteins. One copy of each of the viral (+)RNAs is also recruited during core assembly, together with newly synthesized polymerase complexes and VP2. The polymerase of these novo-formed particles catalyzes the synthesis of complementary minus-strands leading to dsDNA formation. To do so, the polymerase specifically recognizes conserved 3' sequence(s) in plus-strand RNA templates. Once dsRNA synthesis is complete, the polymerase switches to the transcriptional mode, thus providing secondary transcription. This Rotavirus C (strain RVC/Pig/United States/Cowden/1980) (RV-C) protein is RNA-directed RNA polymerase.